Consider the following 269-residue polypeptide: Ribosomal RNA small subunit methyltransferase A (269 aa).

S-adenosyl-L-methionine-binding residues include His11, Leu13, Gly38, Glu59, Asp84, and Asn105.

Belongs to the class I-like SAM-binding methyltransferase superfamily. rRNA adenine N(6)-methyltransferase family. RsmA subfamily.

Its subcellular location is the cytoplasm. It catalyses the reaction adenosine(1518)/adenosine(1519) in 16S rRNA + 4 S-adenosyl-L-methionine = N(6)-dimethyladenosine(1518)/N(6)-dimethyladenosine(1519) in 16S rRNA + 4 S-adenosyl-L-homocysteine + 4 H(+). Functionally, specifically dimethylates two adjacent adenosines (A1518 and A1519) in the loop of a conserved hairpin near the 3'-end of 16S rRNA in the 30S particle. May play a critical role in biogenesis of 30S subunits. The polypeptide is Ribosomal RNA small subunit methyltransferase A (Acaryochloris marina (strain MBIC 11017)).